The sequence spans 366 residues: Peptide chain release factor 2 (366 aa).

N5-methylglutamine is present on Gln253.

This sequence belongs to the prokaryotic/mitochondrial release factor family. In terms of processing, methylated by PrmC. Methylation increases the termination efficiency of RF2.

The protein resides in the cytoplasm. Functionally, peptide chain release factor 2 directs the termination of translation in response to the peptide chain termination codons UGA and UAA. The sequence is that of Peptide chain release factor 2 from Yersinia pestis.